The sequence spans 304 residues: Agmatinase (304 aa).

Residues histidine 126, aspartate 149, histidine 151, aspartate 153, aspartate 230, and aspartate 232 each contribute to the Mn(2+) site.

The protein belongs to the arginase family. Agmatinase subfamily. It depends on Mn(2+) as a cofactor.

The catalysed reaction is agmatine + H2O = urea + putrescine. It functions in the pathway amine and polyamine biosynthesis; putrescine biosynthesis via agmatine pathway; putrescine from agmatine: step 1/1. Its function is as follows. Catalyzes the formation of putrescine from agmatine. The sequence is that of Agmatinase from Edwardsiella ictaluri (strain 93-146).